A 99-amino-acid chain; its full sequence is CLAVATA3/ESR (CLE)-related protein 11 (99 aa).

The first 31 residues, 1-31, serve as a signal peptide directing secretion; the sequence is MTKQPKPCSFLFHISLLSALFVFLLISFAFT. Residues P91 and P94 each carry the hydroxyproline modification. The O-linked (Ara...) hydroxyproline glycan is linked to P94.

This sequence belongs to the CLV3/ESR signal peptide family. In terms of processing, the O-glycosylation (arabinosylation) of the hydroxyproline Pro-94 enhances binding affinity of the CLE11p peptide for its receptor. Mostly expressed in seedlings, roots and siliques, and, to a lower extent, in leaves, flowers, stems and apex.

Its subcellular location is the secreted. It localises to the extracellular space. In terms of biological role, extracellular signal peptide that regulates cell fate. Represses root apical meristem maintenance. Regulates the transition of protophloem cells from proliferation to differentiation, thus impinging on postembryonic growth capacity of the root meristem; this signaling pathway requires CRN and CLV2. This is CLAVATA3/ESR (CLE)-related protein 11 from Arabidopsis thaliana (Mouse-ear cress).